Reading from the N-terminus, the 523-residue chain is Peptide chain release factor 3 (523 aa).

The tr-type G domain maps to 10–277; that stretch reads KKRRTFAIIS…SFVDLAPAPE (268 aa). GTP is bound by residues 19-26, 87-91, and 141-144; these read SHPDAGKT, DTPGH, and NKLD.

It belongs to the TRAFAC class translation factor GTPase superfamily. Classic translation factor GTPase family. PrfC subfamily.

The protein localises to the cytoplasm. Its function is as follows. Increases the formation of ribosomal termination complexes and stimulates activities of RF-1 and RF-2. It binds guanine nucleotides and has strong preference for UGA stop codons. It may interact directly with the ribosome. The stimulation of RF-1 and RF-2 is significantly reduced by GTP and GDP, but not by GMP. The sequence is that of Peptide chain release factor 3 from Lactobacillus helveticus (strain DPC 4571).